The chain runs to 248 residues: 5'-nucleotidase SurE (248 aa).

Positions 8, 9, 39, and 91 each coordinate a divalent metal cation.

This sequence belongs to the SurE nucleotidase family. A divalent metal cation is required as a cofactor.

The protein localises to the cytoplasm. The enzyme catalyses a ribonucleoside 5'-phosphate + H2O = a ribonucleoside + phosphate. Its function is as follows. Nucleotidase that shows phosphatase activity on nucleoside 5'-monophosphates. The sequence is that of 5'-nucleotidase SurE from Citrifermentans bemidjiense (strain ATCC BAA-1014 / DSM 16622 / JCM 12645 / Bem) (Geobacter bemidjiensis).